The primary structure comprises 259 residues: NAD(P)H-quinone oxidoreductase subunit K 2 (259 aa).

Positions 52, 53, 117, and 148 each coordinate [4Fe-4S] cluster.

It belongs to the complex I 20 kDa subunit family. NDH-1 can be composed of about 15 different subunits; different subcomplexes with different compositions have been identified which probably have different functions. The cofactor is [4Fe-4S] cluster.

The protein resides in the cellular thylakoid membrane. The catalysed reaction is a plastoquinone + NADH + (n+1) H(+)(in) = a plastoquinol + NAD(+) + n H(+)(out). The enzyme catalyses a plastoquinone + NADPH + (n+1) H(+)(in) = a plastoquinol + NADP(+) + n H(+)(out). In terms of biological role, NDH-1 shuttles electrons from an unknown electron donor, via FMN and iron-sulfur (Fe-S) centers, to quinones in the respiratory and/or the photosynthetic chain. The immediate electron acceptor for the enzyme in this species is believed to be plastoquinone. Couples the redox reaction to proton translocation, and thus conserves the redox energy in a proton gradient. Cyanobacterial NDH-1 also plays a role in inorganic carbon-concentration. In Cyanothece sp. (strain PCC 7425 / ATCC 29141), this protein is NAD(P)H-quinone oxidoreductase subunit K 2 (ndhK2).